Reading from the N-terminus, the 562-residue chain is Protein wntless (562 aa).

Topologically, residues 1-13 are cytoplasmic; the sequence is MSGTILENLSGRK. Residues 14–34 form a helical membrane-spanning segment; the sequence is LSILVGSLLLCQVLCFLLGGL. Residues 35 to 239 lie on the Lumenal side of the membrane; sequence YAPVPAGHTN…AIHQNGGFTH (205 aa). Asn-58 carries N-linked (GlcNAc...) asparagine glycosylation. The chain crosses the membrane as a helical span at residues 240 to 260; it reads VWLMLKTLLFPFVVGIMVWFW. Residues 261–270 lie on the Cytoplasmic side of the membrane; sequence RRVHLLQRSP. A helical membrane pass occupies residues 271–291; the sequence is ALLEYMLLYLGGALTFLNLPL. Topologically, residues 292-311 are lumenal; it reads EYLSLTIEMPYMLLLSDIRQ. Residues 312–332 form a helical membrane-spanning segment; that stretch reads GIFYAMLLSFWLVFAGEHMLI. At 333–344 the chain is on the cytoplasmic side; it reads QDSHNKSTIRSR. The chain crosses the membrane as a helical span at residues 345 to 365; that stretch reads YWKHLSAVVVGCISLFVFDIS. Over 366-386 the chain is Lumenal; that stretch reads ERGVQLRNPFYSIWTTPLGAK. The helical transmembrane segment at 387 to 407 threads the bilayer; sequence VAMSFILLAGVSAAVYFLFLC. Over 408–441 the chain is Cytoplasmic; that stretch reads YMISKVFKNIGDKRTSLPSMSQARRLHYEGLIYR. Residues 442–462 form a helical membrane-spanning segment; that stretch reads FKFLMLATLLCAALTVTGFIM. Over 463–482 the chain is Lumenal; sequence GQMAEGQWKWNDDVEIQLTS. Residues 483-503 traverse the membrane as a helical segment; it reads AFLTGVYGMWNIYIFALLILY. Topologically, residues 504–562 are cytoplasmic; the sequence is APSHKQWPTMHHSDETTQSNENIVASAASEEIEFSNLPSDSNPSEISSLTSFTRKVAFE. Residues 538 to 562 are disordered; sequence SNLPSDSNPSEISSLTSFTRKVAFE. Positions 539–556 are enriched in polar residues; it reads NLPSDSNPSEISSLTSFT.

It belongs to the wntless family. As to quaternary structure, interacts with wg; in the Golgi. Interacts with Vps35, a component of the retromer complex; wls stability is regulated by Vps35.

The protein resides in the presynaptic cell membrane. Its subcellular location is the postsynaptic cell membrane. It localises to the cell membrane. The protein localises to the endoplasmic reticulum membrane. It is found in the endosome membrane. The protein resides in the golgi apparatus membrane. Functionally, a segment polarity gene required for wingless (wg)-dependent patterning processes, acting in both wg-sending cells and wg-target cells. In non-neuronal cells wls directs wg secretion. The wls traffic loop encompasses the Golgi, the cell surface, an endocytic compartment and a retrograde route leading back to the Golgi, and involves clathrin-mediated endocytosis and the retromer complex (a conserved protein complex consisting of Vps35 and Vps26). In neuronal cells (the larval motorneuron NMJ), the wg signal moves across the synapse via the release of wls-containing exosome-like vesicles. Postsynaptic wls is required for the trafficking of fz2 through the fz2-interacting protein Grip. The protein is Protein wntless of Drosophila persimilis (Fruit fly).